Here is a 166-residue protein sequence, read N- to C-terminus: Putative 4-hydroxy-4-methyl-2-oxoglutarate aldolase (166 aa).

Residues 74 to 77 (GDQI) and Arg-96 contribute to the substrate site. Asp-97 provides a ligand contact to a divalent metal cation.

Belongs to the class II aldolase/RraA-like family. As to quaternary structure, homotrimer. Requires a divalent metal cation as cofactor.

The catalysed reaction is 4-hydroxy-4-methyl-2-oxoglutarate = 2 pyruvate. The enzyme catalyses oxaloacetate + H(+) = pyruvate + CO2. Catalyzes the aldol cleavage of 4-hydroxy-4-methyl-2-oxoglutarate (HMG) into 2 molecules of pyruvate. Also contains a secondary oxaloacetate (OAA) decarboxylase activity due to the common pyruvate enolate transition state formed following C-C bond cleavage in the retro-aldol and decarboxylation reactions. The polypeptide is Putative 4-hydroxy-4-methyl-2-oxoglutarate aldolase (Xanthomonas axonopodis pv. citri (strain 306)).